Consider the following 241-residue polypeptide: NAD(P)H-hydrate epimerase (241 aa).

Positions 11–221 constitute a YjeF N-terminal domain; it reads AASLDKDLME…SIVEKYGLNC (211 aa). Residue 65 to 69 participates in (6S)-NADPHX binding; that stretch reads NNGGD. Asn66 and Asp127 together coordinate K(+). (6S)-NADPHX contacts are provided by residues 131–137 and Asp160; that span reads GFSFGGP. Ser163 is a K(+) binding site.

Belongs to the NnrE/AIBP family. K(+) is required as a cofactor.

The protein resides in the cytoplasm. Its subcellular location is the mitochondrion. It carries out the reaction (6R)-NADHX = (6S)-NADHX. It catalyses the reaction (6R)-NADPHX = (6S)-NADPHX. In terms of biological role, catalyzes the epimerization of the S- and R-forms of NAD(P)HX, a damaged form of NAD(P)H that is a result of enzymatic or heat-dependent hydration. This is a prerequisite for the S-specific NAD(P)H-hydrate dehydratase to allow the repair of both epimers of NAD(P)HX. In Aspergillus fumigatus (strain ATCC MYA-4609 / CBS 101355 / FGSC A1100 / Af293) (Neosartorya fumigata), this protein is NAD(P)H-hydrate epimerase.